The sequence spans 498 residues: Ribulose bisphosphate carboxylase large chain (498 aa).

Residues 1–2 constitute a propeptide that is removed on maturation; sequence MS. At Pro-3 the chain carries N-acetylproline. The residue at position 14 (Lys-14) is an N6,N6,N6-trimethyllysine. Substrate is bound by residues Asn-123 and Thr-173. Lys-175 acts as the Proton acceptor in catalysis. Lys-177 is a substrate binding site. Mg(2+) is bound by residues Lys-201, Asp-203, and Glu-204. The residue at position 201 (Lys-201) is an N6-carboxylysine. His-294 serves as the catalytic Proton acceptor. Residues Arg-295, His-327, and Ser-379 each contribute to the substrate site. The segment at 471–498 is disordered; it reads PVDTLDPNDKKQRDNEDTLADKLFGDKG.

This sequence belongs to the RuBisCO large chain family. Type I subfamily. In terms of assembly, heterohexadecamer of 8 large chains and 8 small chains; disulfide-linked. The disulfide link is formed within the large subunit homodimers. It depends on Mg(2+) as a cofactor. Post-translationally, the disulfide bond which can form in the large chain dimeric partners within the hexadecamer appears to be associated with oxidative stress and protein turnover.

Its subcellular location is the plastid. It catalyses the reaction 2 (2R)-3-phosphoglycerate + 2 H(+) = D-ribulose 1,5-bisphosphate + CO2 + H2O. The catalysed reaction is D-ribulose 1,5-bisphosphate + O2 = 2-phosphoglycolate + (2R)-3-phosphoglycerate + 2 H(+). Functionally, ruBisCO catalyzes two reactions: the carboxylation of D-ribulose 1,5-bisphosphate, the primary event in carbon dioxide fixation, as well as the oxidative fragmentation of the pentose substrate in the photorespiration process. Both reactions occur simultaneously and in competition at the same active site. This Cuscuta reflexa (Southern Asian dodder) protein is Ribulose bisphosphate carboxylase large chain (rbcL).